Reading from the N-terminus, the 389-residue chain is UDP-D-apiose/UDP-D-xylose synthase 1 (389 aa).

The NAD(+) site is built by F28, I29, D49, N76, I77, and L96. Residues Y105, T139, E141, R182, and Y185 each contribute to the UDP-alpha-D-glucuronate site. NAD(+) contacts are provided by Y185 and K189. Residue Y185 is the Proton acceptor of the active site. Residue N214 participates in UDP-alpha-D-glucuronate binding. NAD(+) contacts are provided by W215 and R235. UDP-alpha-D-glucuronate is bound by residues K251, V253, R260, Y331, Y335, D337, and R341.

The protein belongs to the NAD(P)-dependent epimerase/dehydratase family. Homodimer and heterodimer with AXS2. NAD(+) serves as cofactor. As to expression, widely expressed with stronger expression in leaves and stems, and lower levels in flowers, siliques, pistils, pollen and roots.

It localises to the cytoplasm. The enzyme catalyses UDP-alpha-D-glucuronate + H(+) = UDP-alpha-D-xylose + CO2. It carries out the reaction UDP-alpha-D-glucuronate + H(+) = UDP-alpha-D-apiose + CO2. Inhibited by UDP-D-galacturonate. Together with AXS2, catalyzes the conversion of UDP-D-glucuronate into a mixture of UDP-D-apiose (UDP-Api) as the main product and UDP-D-xylose to a lesser extent, via a cycle of oxidation and reduction. D-Apiose (3-C-hydroxymethyl-d-erythrose) is the only plant cell wall monosaccharide with a branched carbon skeleton and is found in rhamnogalacturonan II (RG-II), apiogalacturonan, and several apioglycosides. The polypeptide is UDP-D-apiose/UDP-D-xylose synthase 1 (Arabidopsis thaliana (Mouse-ear cress)).